The chain runs to 206 residues: MAVPRWAVRDLTQISSARELSLRLEQARNDFRATVGSICYFNASARTPGQFDDEYIMTDQSLTYVYADGVTAQSCAMNRLLPSSSSNFGAAATAIPPWLLDPPRLNRLLREGTDEGGLVNYYEGPHKNAFFLAIMRSCIFVRPGADEINGVSYDFFARSGNYTEQAEEEEEEEEEEEEEEVLDREFQLGNLVSYPIIAWGSCPNSA.

The segment at 162–182 is disordered; it reads YTEQAEEEEEEEEEEEEEEVL. Positions 165–182 are enriched in acidic residues; sequence QAEEEEEEEEEEEEEEVL.

Functionally, involved in tumor formation and increases auxin and cytokinin effects in host plants. This is Protein 6b (6b) from Allorhizobium ampelinum (strain ATCC BAA-846 / DSM 112012 / S4) (Agrobacterium vitis (strain S4)).